A 163-amino-acid polypeptide reads, in one-letter code: Phosphopantetheine adenylyltransferase (163 aa).

Ser-9 contributes to the substrate binding site. ATP contacts are provided by residues 9-10 (SF) and His-17. Substrate is bound by residues Lys-41, Ile-75, and Arg-89. ATP is bound by residues 90–92 (GIR), Glu-100, and 125–131 (HLYVRSD).

It belongs to the bacterial CoaD family. In terms of assembly, homohexamer. Mg(2+) serves as cofactor.

It localises to the cytoplasm. The catalysed reaction is (R)-4'-phosphopantetheine + ATP + H(+) = 3'-dephospho-CoA + diphosphate. It functions in the pathway cofactor biosynthesis; coenzyme A biosynthesis; CoA from (R)-pantothenate: step 4/5. Its function is as follows. Reversibly transfers an adenylyl group from ATP to 4'-phosphopantetheine, yielding dephospho-CoA (dPCoA) and pyrophosphate. The sequence is that of Phosphopantetheine adenylyltransferase from Borreliella burgdorferi (strain ZS7) (Borrelia burgdorferi).